The sequence spans 309 residues: Probable manganese-dependent inorganic pyrophosphatase (309 aa).

Residues His9, Asp13, Asp15, Asp75, His97, and Asp149 each contribute to the Mn(2+) site.

Belongs to the PPase class C family. Mn(2+) serves as cofactor.

It is found in the cytoplasm. The catalysed reaction is diphosphate + H2O = 2 phosphate + H(+). This chain is Probable manganese-dependent inorganic pyrophosphatase, found in Staphylococcus epidermidis (strain ATCC 35984 / DSM 28319 / BCRC 17069 / CCUG 31568 / BM 3577 / RP62A).